Here is a 270-residue protein sequence, read N- to C-terminus: Tetraspanin-14 (270 aa).

Topologically, residues 1-17 (MHYYRYSNAEVSCWYKY) are cytoplasmic. A helical transmembrane segment spans residues 18–38 (LLFSYNIVFWLAGVVFLGVGL). Residues 39-61 (WAWSEKGVLSDLTKVTRLHGIDP) are Extracellular-facing. Residues 62 to 82 (VVLVLMVGVVMFTLGFAGCVG) traverse the membrane as a helical segment. At 83-92 (ALRENICLLK) the chain is on the cytoplasmic side. A helical membrane pass occupies residues 93 to 113 (FFCGAIVLIFFLELAVAVLAF). At 114–232 (LFQDWVRDRF…QALEGWLPRN (119 aa)) the chain is on the extracellular side. The tract at residues 114–232 (LFQDWVRDRF…QALEGWLPRN (119 aa)) is necessary and sufficient for interaction with ADAM10. Intrachain disulfides connect Cys153-Cys221, Cys154-Cys186, Cys170-Cys180, and Cys187-Cys200. A glycan (N-linked (GlcNAc...) asparagine) is linked at Asn169. The chain crosses the membrane as a helical span at residues 233-253 (IYIVAGVFIAISLLQIFGIFL). The Cytoplasmic portion of the chain corresponds to 254–270 (ARTLISDIEAVKAGHHF).

The protein belongs to the tetraspanin (TM4SF) family. In terms of assembly, interacts with ADAM10; the interaction promotes ADAM10 maturation and cell surface expression.

The protein localises to the cell membrane. Its function is as follows. Part of TspanC8 subgroup, composed of 6 members that interact with the transmembrane metalloprotease ADAM10. This interaction is required for ADAM10 exit from the endoplasmic reticulum and for enzymatic maturation and trafficking to the cell surface as well as substrate specificity. Different TspanC8/ADAM10 complexes have distinct substrates. Negatively regulates ADAM10-mediated cleavage of GP6. Promotes ADAM10-mediated cleavage of CDH5. The protein is Tetraspanin-14 (Tspan14) of Mus musculus (Mouse).